Here is a 214-residue protein sequence, read N- to C-terminus: Uracil phosphoribosyltransferase (214 aa).

5-phospho-alpha-D-ribose 1-diphosphate contacts are provided by residues Arg81, Arg106, and 133-141 (DPMLATGNS). Uracil contacts are provided by residues Ile196 and 201-203 (GDA). Asp202 serves as a coordination point for 5-phospho-alpha-D-ribose 1-diphosphate.

It belongs to the UPRTase family. Mg(2+) is required as a cofactor.

The enzyme catalyses UMP + diphosphate = 5-phospho-alpha-D-ribose 1-diphosphate + uracil. Its pathway is pyrimidine metabolism; UMP biosynthesis via salvage pathway; UMP from uracil: step 1/1. Allosterically activated by GTP. Its function is as follows. Catalyzes the conversion of uracil and 5-phospho-alpha-D-ribose 1-diphosphate (PRPP) to UMP and diphosphate. The chain is Uracil phosphoribosyltransferase from Legionella pneumophila subsp. pneumophila (strain Philadelphia 1 / ATCC 33152 / DSM 7513).